The primary structure comprises 426 residues: Serine--tRNA ligase (426 aa).

T233 to E235 contributes to the L-serine binding site. Residue R264–E266 participates in ATP binding. E287 lines the L-serine pocket. Residue E351–S354 participates in ATP binding. S387 lines the L-serine pocket.

The protein belongs to the class-II aminoacyl-tRNA synthetase family. Type-1 seryl-tRNA synthetase subfamily. Homodimer. The tRNA molecule binds across the dimer.

The protein resides in the cytoplasm. The catalysed reaction is tRNA(Ser) + L-serine + ATP = L-seryl-tRNA(Ser) + AMP + diphosphate + H(+). It catalyses the reaction tRNA(Sec) + L-serine + ATP = L-seryl-tRNA(Sec) + AMP + diphosphate + H(+). It functions in the pathway aminoacyl-tRNA biosynthesis; selenocysteinyl-tRNA(Sec) biosynthesis; L-seryl-tRNA(Sec) from L-serine and tRNA(Sec): step 1/1. Functionally, catalyzes the attachment of serine to tRNA(Ser). Is also able to aminoacylate tRNA(Sec) with serine, to form the misacylated tRNA L-seryl-tRNA(Sec), which will be further converted into selenocysteinyl-tRNA(Sec). This chain is Serine--tRNA ligase, found in Pseudomonas syringae pv. syringae (strain B728a).